Reading from the N-terminus, the 170-residue chain is MTIKNFQNNNDWSELLVSVRRVTTVTKGGRRFSFSILVVVGDEKGRVGCGMGKHAEVAEARIKAVNAAKKSMIRVYLREGRTLHHDIKAKFCSGEIVLRAARAGTGIIAGGAIRSVFEVLGIKDVVAKSTRSNNPHNVICAVFKAFDNMLSPRQVASKRGKKISEVVGNR.

One can recognise an S5 DRBM domain in the interval 12–75 (WSELLVSVRR…NAAKKSMIRV (64 aa)).

It belongs to the universal ribosomal protein uS5 family. Part of the 30S ribosomal subunit. Contacts proteins S4 and S8.

With S4 and S12 plays an important role in translational accuracy. Its function is as follows. Located at the back of the 30S subunit body where it stabilizes the conformation of the head with respect to the body. The chain is Small ribosomal subunit protein uS5 from Wolbachia sp. subsp. Brugia malayi (strain TRS).